The sequence spans 315 residues: Ribose-phosphate pyrophosphokinase (315 aa).

ATP contacts are provided by residues Asp-37–Glu-39 and Arg-96–Gln-97. Positions 131 and 170 each coordinate Mg(2+). The active site involves Lys-194. D-ribose 5-phosphate contacts are provided by residues Arg-196, Asp-220, and Asp-224–Thr-228.

The protein belongs to the ribose-phosphate pyrophosphokinase family. Class I subfamily. In terms of assembly, homohexamer. Requires Mg(2+) as cofactor.

The protein resides in the cytoplasm. It catalyses the reaction D-ribose 5-phosphate + ATP = 5-phospho-alpha-D-ribose 1-diphosphate + AMP + H(+). It functions in the pathway metabolic intermediate biosynthesis; 5-phospho-alpha-D-ribose 1-diphosphate biosynthesis; 5-phospho-alpha-D-ribose 1-diphosphate from D-ribose 5-phosphate (route I): step 1/1. Functionally, involved in the biosynthesis of the central metabolite phospho-alpha-D-ribosyl-1-pyrophosphate (PRPP) via the transfer of pyrophosphoryl group from ATP to 1-hydroxyl of ribose-5-phosphate (Rib-5-P). This is Ribose-phosphate pyrophosphokinase from Escherichia coli O6:H1 (strain CFT073 / ATCC 700928 / UPEC).